The primary structure comprises 180 residues: Adenine phosphoribosyltransferase (180 aa).

The protein belongs to the purine/pyrimidine phosphoribosyltransferase family. In terms of assembly, homodimer.

Its subcellular location is the cytoplasm. The catalysed reaction is AMP + diphosphate = 5-phospho-alpha-D-ribose 1-diphosphate + adenine. It functions in the pathway purine metabolism; AMP biosynthesis via salvage pathway; AMP from adenine: step 1/1. Its function is as follows. Catalyzes a salvage reaction resulting in the formation of AMP, that is energically less costly than de novo synthesis. The chain is Adenine phosphoribosyltransferase from Agrobacterium fabrum (strain C58 / ATCC 33970) (Agrobacterium tumefaciens (strain C58)).